The chain runs to 270 residues: BPI fold-containing family A member 5 (270 aa).

A signal peptide spans 1 to 19 (MFLAGSFIVLCGLLAQSTA). A disulfide bond links Cys-196 and Cys-238.

Belongs to the BPI/LBP/Plunc superfamily. Plunc family. Expressed in interpapillar epithelium of the anterior part of the tongue.

It localises to the secreted. In terms of biological role, may play a role in innate immunity in the oral cavity. The sequence is that of BPI fold-containing family A member 5 (Bpifa5) from Mus musculus (Mouse).